Consider the following 416-residue polypeptide: Histidine--tRNA ligase (416 aa).

This sequence belongs to the class-II aminoacyl-tRNA synthetase family. In terms of assembly, homodimer.

The protein resides in the cytoplasm. It carries out the reaction tRNA(His) + L-histidine + ATP = L-histidyl-tRNA(His) + AMP + diphosphate + H(+). In Dictyoglomus thermophilum (strain ATCC 35947 / DSM 3960 / H-6-12), this protein is Histidine--tRNA ligase.